The sequence spans 172 residues: Putative phosphoesterase Bcer98_0945 (172 aa).

Catalysis depends on histidine 34, which acts as the Proton donor. Short sequence motifs (HXTX) lie at residues 34-37 and 115-118; these read HITL and HLTI. The active-site Proton acceptor is the histidine 115.

The protein belongs to the 2H phosphoesterase superfamily. YjcG family.

This is Putative phosphoesterase Bcer98_0945 from Bacillus cytotoxicus (strain DSM 22905 / CIP 110041 / 391-98 / NVH 391-98).